The following is a 170-amino-acid chain: Shikimate kinase (170 aa).

15-20 (GAGKTT) contributes to the ATP binding site. Thr-19 is a binding site for Mg(2+). Asp-37, Arg-61, and Gly-83 together coordinate substrate. Position 121 (Arg-121) interacts with ATP. Arg-140 contacts substrate.

It belongs to the shikimate kinase family. In terms of assembly, monomer. It depends on Mg(2+) as a cofactor.

The protein localises to the cytoplasm. It carries out the reaction shikimate + ATP = 3-phosphoshikimate + ADP + H(+). It participates in metabolic intermediate biosynthesis; chorismate biosynthesis; chorismate from D-erythrose 4-phosphate and phosphoenolpyruvate: step 5/7. Functionally, catalyzes the specific phosphorylation of the 3-hydroxyl group of shikimic acid using ATP as a cosubstrate. The polypeptide is Shikimate kinase (Neisseria meningitidis serogroup C (strain 053442)).